The following is a 597-amino-acid chain: Centrosomal protein of 70 kDa (597 aa).

The tract at residues 1 to 23 (MFPVAPKPQDSSQASDRLMTEKQ) is disordered. Coiled-coil stretches lie at residues 66-179 (MRQN…QMEV) and 254-326 (TYKG…KKAE). The TPR repeat unit spans residues 483–516 (NGVYPRMNEVYTRLGEMNNAVRNLQELLELDSSS).

In terms of assembly, directly interacts with tubulin-gamma; this interaction determines centrosomal localization.

The protein resides in the cytoplasm. Its subcellular location is the cytoskeleton. The protein localises to the microtubule organizing center. It localises to the centrosome. Its function is as follows. Plays a role in the organization of both preexisting and nascent microtubules in interphase cells. During mitosis, required for the organization and orientation of the mitotic spindle. This is Centrosomal protein of 70 kDa (CEP70) from Pongo abelii (Sumatran orangutan).